The sequence spans 300 residues: Estradiol 17-beta-dehydrogenase 11 (300 aa).

An N-terminal signal peptide occupies residues 1–19; it reads MKFLLDVLLLLPLLIVCSL. Residue 40–64 participates in NADP(+) binding; that stretch reads LITGAGHGIGRLTAYEFAKLKSKLV. Serine 172 is a substrate binding site. Residue tyrosine 185 is the Proton acceptor of the active site.

The protein belongs to the short-chain dehydrogenases/reductases (SDR) family. 17-beta-HSD 3 subfamily.

The protein resides in the endoplasmic reticulum. It localises to the lipid droplet. The catalysed reaction is 17beta-estradiol + NAD(+) = estrone + NADH + H(+). It catalyses the reaction 17beta-estradiol + NADP(+) = estrone + NADPH + H(+). Its function is as follows. Can convert androstan-3-alpha,17-beta-diol (3-alpha-diol) to androsterone in vitro, suggesting that it may participate in androgen metabolism during steroidogenesis. May act by metabolizing compounds that stimulate steroid synthesis and/or by generating metabolites that inhibit it. Has no activity toward DHEA (dehydroepiandrosterone), or A-dione (4-androste-3,17-dione), and only a slight activity toward testosterone to A-dione. The protein is Estradiol 17-beta-dehydrogenase 11 (HSD17B11) of Pongo abelii (Sumatran orangutan).